A 243-amino-acid chain; its full sequence is Ion-translocating oxidoreductase complex subunit E (243 aa).

Helical transmembrane passes span Leu40–Leu60, Ala72–Leu92, Asp94–Gly114, Ala129–Ile149, Ile152–Phe172, and Gly183–Leu203.

The protein belongs to the NqrDE/RnfAE family. As to quaternary structure, the complex is composed of six subunits: RnfA, RnfB, RnfC, RnfD, RnfE and RnfG.

The protein localises to the cellular chromatophore membrane. In terms of biological role, part of a membrane-bound complex that couples electron transfer with translocation of ions across the membrane. Required for nitrogen fixation. Involved in electron transfer to nitrogenase. The chain is Ion-translocating oxidoreductase complex subunit E from Rhodobacter capsulatus (Rhodopseudomonas capsulata).